A 349-amino-acid polypeptide reads, in one-letter code: Phosphate acyltransferase (349 aa).

Belongs to the PlsX family. Homodimer. Probably interacts with PlsY.

It is found in the cytoplasm. It catalyses the reaction a fatty acyl-[ACP] + phosphate = an acyl phosphate + holo-[ACP]. The protein operates within lipid metabolism; phospholipid metabolism. Catalyzes the reversible formation of acyl-phosphate (acyl-PO(4)) from acyl-[acyl-carrier-protein] (acyl-ACP). This enzyme utilizes acyl-ACP as fatty acyl donor, but not acyl-CoA. The sequence is that of Phosphate acyltransferase from Akkermansia muciniphila (strain ATCC BAA-835 / DSM 22959 / JCM 33894 / BCRC 81048 / CCUG 64013 / CIP 107961 / Muc).